Consider the following 295-residue polypeptide: Peptide transport system permease protein SapC (295 aa).

Helical transmembrane passes span I27–Y47, L102–L122, F129–I149, L157–Y177, V219–G239, and P262–F282. In terms of domain architecture, ABC transmembrane type-1 spans L98–L278.

This sequence belongs to the binding-protein-dependent transport system permease family. OppBC subfamily.

It is found in the cell inner membrane. Its function is as follows. Involved in a peptide intake transport system that plays a role in the resistance to antimicrobial peptides. The protein is Peptide transport system permease protein SapC (sapC) of Haemophilus influenzae (strain ATCC 51907 / DSM 11121 / KW20 / Rd).